The primary structure comprises 391 residues: Cyclin-A1 (391 aa).

Belongs to the cyclin family. Cyclin AB subfamily. As to quaternary structure, interacts with the CDK1 and the CDK2 protein kinases to form a serine/threonine kinase holoenzyme complex. The cyclin subunit imparts substrate specificity to the complex.

It localises to the nucleus. Its function is as follows. May be involved in the control of the cell cycle at the G1/S (start) and G2/M (mitosis) transitions. The polypeptide is Cyclin-A1 (ccna1) (Carassius auratus (Goldfish)).